Reading from the N-terminus, the 89-residue chain is Small ribosomal subunit protein uS15 (89 aa).

This sequence belongs to the universal ribosomal protein uS15 family. In terms of assembly, part of the 30S ribosomal subunit. Forms a bridge to the 50S subunit in the 70S ribosome, contacting the 23S rRNA.

Functionally, one of the primary rRNA binding proteins, it binds directly to 16S rRNA where it helps nucleate assembly of the platform of the 30S subunit by binding and bridging several RNA helices of the 16S rRNA. Forms an intersubunit bridge (bridge B4) with the 23S rRNA of the 50S subunit in the ribosome. In Cupriavidus pinatubonensis (strain JMP 134 / LMG 1197) (Cupriavidus necator (strain JMP 134)), this protein is Small ribosomal subunit protein uS15.